We begin with the raw amino-acid sequence, 211 residues long: Large ribosomal subunit protein uL3 (211 aa).

Belongs to the universal ribosomal protein uL3 family. Part of the 50S ribosomal subunit. Forms a cluster with proteins L14 and L19.

Its function is as follows. One of the primary rRNA binding proteins, it binds directly near the 3'-end of the 23S rRNA, where it nucleates assembly of the 50S subunit. This is Large ribosomal subunit protein uL3 from Akkermansia muciniphila (strain ATCC BAA-835 / DSM 22959 / JCM 33894 / BCRC 81048 / CCUG 64013 / CIP 107961 / Muc).